We begin with the raw amino-acid sequence, 542 residues long: MVKKRFHFSLQTKIMGLIAALLVFVIGVLTITLAVQHTQGERRQAEQLAVQTARTISYMPPVKELIERKDGHAAQTQEVIEQMKEQTGAFAIYVLNEKGDIRSASGKSGLKKLERSREILFGGSHVSETKADGRRVIRGSAPIIKEQKGYSQVIGSVSVDFLQTETEQSIKKHLRNLSVIAVLVLLLGFIGAAVLAKSIRKDTLGLEPHEIAALYRERNAMLFAIREGIIATNREGVVTMMNVSAAEMLKLPEPVIHLPIDDVMPGAGLMSVLEKGEMLPNQEVSVNDQVFIINTKVMNQGGQAYGIVVSFREKTELKKLIDTLTEVRKYSEDLRAQTHEFSNKLYAILGLLELGEYDEAIDLIKEEYAIQNEQHDLLFHNIHSQQVQAILLGKISKASEKKVKLVIDENSSLAPLPAHIGLSHLITIIGNLIDNAFEAVAEQSVKEVLFFITDMGHDIVIEVSDTGPGVPPEKIEAVFERGYSSKGMRRGYGLANVKDSVRELGGWIELANQKTGGAVFTVFIPKEKQRGNPFDSHRDCGG.

Residues 1–13 (MVKKRFHFSLQTK) are Cytoplasmic-facing. A helical transmembrane segment spans residues 14–34 (IMGLIAALLVFVIGVLTITLA). Over 35–175 (VQHTQGERRQ…TEQSIKKHLR (141 aa)) the chain is Extracellular. The chain crosses the membrane as a helical span at residues 176–196 (NLSVIAVLVLLLGFIGAAVLA). At 197 to 542 (KSIRKDTLGL…PFDSHRDCGG (346 aa)) the chain is on the cytoplasmic side. Residues 216–279 (RERNAMLFAI…MSVLEKGEML (64 aa)) enclose the PAS domain. Residues 336–528 (AQTHEFSNKL…VFTVFIPKEK (193 aa)) enclose the Histidine kinase domain. Histidine 339 is modified (phosphohistidine; by autocatalysis).

It is found in the cell membrane. It catalyses the reaction ATP + protein L-histidine = ADP + protein N-phospho-L-histidine.. Member of the two-component regulatory system CitT/CitS. Regulates the expression of the citM-yflN operon. Functions probably as a membrane-associated protein kinase that phosphorylates CitT in response to environmental citrate or Mg(2+)-citrate complex. The polypeptide is Sensor protein CitS (citS) (Bacillus subtilis (strain 168)).